A 64-amino-acid chain; its full sequence is Prokaryotic ubiquitin-like protein Pup (64 aa).

The disordered stretch occupies residues 1–36; the sequence is MAQEQTKRGGGGGDDEDVTGTTAAGQERRKKLAQDT. Residues 21-58 are ARC ATPase binding; that stretch reads TTAAGQERRKKLAQDTDDLLDEIDDVLEENAEDFVRAY. Positions 26 to 52 form a coiled coil; that stretch reads QERRKKLAQDTDDLLDEIDDVLEENAE. A Deamidated glutamine modification is found at Gln64. Gln64 is covalently cross-linked (Isoglutamyl lysine isopeptide (Gln-Lys) (interchain with K-? in acceptor proteins)).

It belongs to the prokaryotic ubiquitin-like protein family. As to quaternary structure, strongly interacts with the proteasome-associated ATPase ARC through a hydrophobic interface; the interacting region of Pup lies in its C-terminal half. There is one Pup binding site per ARC hexamer ring. Is modified by deamidation of its C-terminal glutamine to glutamate by the deamidase Dop, a prerequisite to the subsequent pupylation process.

Its pathway is protein degradation; proteasomal Pup-dependent pathway. Its function is as follows. Protein modifier that is covalently attached to lysine residues of substrate proteins, thereby targeting them for proteasomal degradation. The tagging system is termed pupylation. The chain is Prokaryotic ubiquitin-like protein Pup from Mycobacterium ulcerans (strain Agy99).